The sequence spans 395 residues: Phosphoglycerate kinase (395 aa).

Substrate is bound by residues 21 to 23 (DLN), arginine 36, 59 to 62 (HLGR), arginine 113, and arginine 146. ATP contacts are provided by residues lysine 197, glutamate 324, and 350-353 (GGDT).

The protein belongs to the phosphoglycerate kinase family. In terms of assembly, monomer.

It is found in the cytoplasm. The catalysed reaction is (2R)-3-phosphoglycerate + ATP = (2R)-3-phospho-glyceroyl phosphate + ADP. Its pathway is carbohydrate degradation; glycolysis; pyruvate from D-glyceraldehyde 3-phosphate: step 2/5. This chain is Phosphoglycerate kinase, found in Acinetobacter baumannii (strain ACICU).